We begin with the raw amino-acid sequence, 312 residues long: Ribonuclease Z (312 aa).

Residues histidine 62, histidine 64, aspartate 66, histidine 67, histidine 144, aspartate 215, and histidine 273 each contribute to the Zn(2+) site. The active-site Proton acceptor is aspartate 66.

This sequence belongs to the RNase Z family. Homodimer. The cofactor is Zn(2+).

The enzyme catalyses Endonucleolytic cleavage of RNA, removing extra 3' nucleotides from tRNA precursor, generating 3' termini of tRNAs. A 3'-hydroxy group is left at the tRNA terminus and a 5'-phosphoryl group is left at the trailer molecule.. Functionally, zinc phosphodiesterase, which displays some tRNA 3'-processing endonuclease activity. Probably involved in tRNA maturation, by removing a 3'-trailer from precursor tRNA. In Prochlorococcus marinus (strain MIT 9301), this protein is Ribonuclease Z.